Consider the following 142-residue polypeptide: MARARGRGRRDLKSEINIVPLLDVLLVLLLIFMATAPIITQSVEVDLPDATESQAVSSNDNPPVIVEVSGIGQYTVVVEKDRLERLPPEQVVAEVSSRFKANPKTVFLIGGAKDVPYDEIIKALNLLHSAGVKSVGLMTQPI.

The Cytoplasmic segment spans residues 1–17; the sequence is MARARGRGRRDLKSEIN. A helical transmembrane segment spans residues 18-38; it reads IVPLLDVLLVLLLIFMATAPI. At 39–142 the chain is on the periplasmic side; sequence ITQSVEVDLP…KSVGLMTQPI (104 aa).

This sequence belongs to the ExbD/TolR family. As to quaternary structure, the Tol-Pal system is composed of five core proteins: the inner membrane proteins TolA, TolQ and TolR, the periplasmic protein TolB and the outer membrane protein Pal. They form a network linking the inner and outer membranes and the peptidoglycan layer.

Its subcellular location is the cell inner membrane. Part of the Tol-Pal system, which plays a role in outer membrane invagination during cell division and is important for maintaining outer membrane integrity. Required, with TolQ, for the proton motive force-dependent activation of TolA and for TolA-Pal interaction. The protein is Tol-Pal system protein TolR of Escherichia coli O157:H7.